We begin with the raw amino-acid sequence, 375 residues long: Delta(9) fatty acid conjugase-like enzyme (375 aa).

2 consecutive transmembrane segments (helical) span residues 38–58 (LSLSFYYLFYDLIKVCILFYV) and 66–86 (LPYSLSCIVWPLYWFFQGAFL). The Histidine box-1 signature appears at 94–98 (HECGH). Residues 130–134 (HRNHH) carry the Histidine box-2 motif. 3 helical membrane passes run 168–188 (FGLVVNMVFELTFGYPSYLIF), 219–239 (VFFSDVGICIVLYALYRIAIA), and 241–261 (GAMLVLYVYGLPWVVMSAFIF). The Histidine box-3 signature appears at 307–311 (HVVHH).

The protein belongs to the fatty acid desaturase type 1 family.

It is found in the membrane. Functionally, involved in the biosynthesis of dimorphecolic acid (9-OH-18:2(10E,12E)). Catalyzes the formation of the C-9 hydroxyl group and the (E)-delta(10) double bond from the trans-linoleic acid (16:2(9Z,12E)) produced by FAD2-1. Very limited activity with cis-linoleic acid (16:2(9Z,12Z)). This Dimorphotheca sinuata (African daisy) protein is Delta(9) fatty acid conjugase-like enzyme.